The chain runs to 464 residues: Endo-1,4-beta-xylanase A (464 aa).

Positions Met1 to Ala33 are cleaved as a signal peptide. The region spanning Thr40–Ala349 is the GH10 domain. Glu166 (proton donor) is an active-site residue. Residue Glu271 is the Nucleophile of the active site. The region spanning Ser354–Gly457 is the CBM2 domain.

The protein belongs to the glycosyl hydrolase 10 (cellulase F) family. Requires Does not require any standard metal (Mg(2+), Mn2(+), Ca(2+)). as cofactor.

It carries out the reaction Endohydrolysis of (1-&gt;4)-beta-D-xylosidic linkages in xylans.. The protein operates within glycan degradation; xylan degradation. Its activity is regulated as follows. Completely inhibited by Hg(2+), unaffected by EDTA. Functionally, contributes to hydrolysis of hemicellulose, the major component of plant cell-walls. Hydrolyzes xylan to xylose and xylobiose. This is Endo-1,4-beta-xylanase A (xynAS9) from Streptomyces sp.